We begin with the raw amino-acid sequence, 92 residues long: Regakine-1 (92 aa).

Residues 1-21 (MRVSLAALAFLLTLAVLHSEA) form the signal peptide. Intrachain disulfides connect Cys32–Cys56 and Cys33–Cys72.

Belongs to the intercrine beta (chemokine CC) family. Plasma serum.

Its subcellular location is the secreted. Functionally, chemotactic activity for neutrophils and lymphocytes. Binds to heparin. In Bos taurus (Bovine), this protein is Regakine-1.